Consider the following 363-residue polypeptide: UDP-N-acetylglucosamine--N-acetylmuramyl-(pentapeptide) pyrophosphoryl-undecaprenol N-acetylglucosamine transferase (363 aa).

UDP-N-acetyl-alpha-D-glucosamine is bound by residues 10 to 12 (TGG), Asn-124, Ser-195, Ile-250, and Gln-295.

Belongs to the glycosyltransferase 28 family. MurG subfamily.

It localises to the cell membrane. The catalysed reaction is di-trans,octa-cis-undecaprenyl diphospho-N-acetyl-alpha-D-muramoyl-L-alanyl-D-glutamyl-meso-2,6-diaminopimeloyl-D-alanyl-D-alanine + UDP-N-acetyl-alpha-D-glucosamine = di-trans,octa-cis-undecaprenyl diphospho-[N-acetyl-alpha-D-glucosaminyl-(1-&gt;4)]-N-acetyl-alpha-D-muramoyl-L-alanyl-D-glutamyl-meso-2,6-diaminopimeloyl-D-alanyl-D-alanine + UDP + H(+). The protein operates within cell wall biogenesis; peptidoglycan biosynthesis. In terms of biological role, cell wall formation. Catalyzes the transfer of a GlcNAc subunit on undecaprenyl-pyrophosphoryl-MurNAc-pentapeptide (lipid intermediate I) to form undecaprenyl-pyrophosphoryl-MurNAc-(pentapeptide)GlcNAc (lipid intermediate II). This Listeria welshimeri serovar 6b (strain ATCC 35897 / DSM 20650 / CCUG 15529 / CIP 8149 / NCTC 11857 / SLCC 5334 / V8) protein is UDP-N-acetylglucosamine--N-acetylmuramyl-(pentapeptide) pyrophosphoryl-undecaprenol N-acetylglucosamine transferase.